A 97-amino-acid chain; its full sequence is U-scoloptoxin(10)-Ssd2a (97 aa).

The signal sequence occupies residues 1–23; it reads MNKSMLIFFTILFLTYIIEEKEA.

Post-translationally, contains 3 disulfide bonds. Expressed by the venom gland.

It localises to the secreted. The sequence is that of U-scoloptoxin(10)-Ssd2a from Scolopendra dehaani (Thai centipede).